A 717-amino-acid polypeptide reads, in one-letter code: Polyribonucleotide nucleotidyltransferase (717 aa).

Mg(2+) is bound by residues Asp-486 and Asp-492. A KH domain is found at 553 to 612 (PKIIQLQIDIDKISLVIGSTGKTVKAITDEFEVRVQIEQDGRITLFGTDSLKMQKAKARI). The region spanning 622–715 (GEIYEGVVKK…KFGKIELELV (94 aa)) is the S1 motif domain. Positions 650-683 (SNRPKSRDDRYGDMRHSRYGSGRHSRYGRDSRNT) are disordered. The segment covering 654–665 (KSRDDRYGDMRH) has biased composition (basic and acidic residues). The span at 666–675 (SRYGSGRHSR) shows a compositional bias: basic residues.

Belongs to the polyribonucleotide nucleotidyltransferase family. Mg(2+) serves as cofactor.

The protein localises to the cytoplasm. The catalysed reaction is RNA(n+1) + phosphate = RNA(n) + a ribonucleoside 5'-diphosphate. Involved in mRNA degradation. Catalyzes the phosphorolysis of single-stranded polyribonucleotides processively in the 3'- to 5'-direction. The polypeptide is Polyribonucleotide nucleotidyltransferase (Borrelia turicatae (strain 91E135)).